The sequence spans 128 residues: Large ribosomal subunit protein eL22 (128 aa).

T62 bears the Phosphothreonine mark. A Phosphoserine modification is found at S66. An N6-succinyllysine modification is found at K69.

Belongs to the eukaryotic ribosomal protein eL22 family. As to quaternary structure, component of the large ribosomal subunit.

Its subcellular location is the cytoplasm. In terms of biological role, component of the large ribosomal subunit. The ribosome is a large ribonucleoprotein complex responsible for the synthesis of proteins in the cell. This Sus scrofa (Pig) protein is Large ribosomal subunit protein eL22 (RPL22).